A 460-amino-acid polypeptide reads, in one-letter code: ESX-1 secretion-associated protein EspB (460 aa).

Disordered regions lie at residues 92–116 (LDNDGEGTVQAESAGAVGGDSSAEL), 303–335 (PSDGSGVTPGTGMPAAPMVPPTGSPGGGLPADT), and 405–441 (LGGGGMGMPMGAAHQGQGGAKSKGSQQEDEALYTEDR).

Cleaved in the C-terminal region by MycP1.

It localises to the secreted. The protein is ESX-1 secretion-associated protein EspB of Mycobacterium tuberculosis (strain CDC 1551 / Oshkosh).